Here is a 271-residue protein sequence, read N- to C-terminus: Ribosomal RNA small subunit methyltransferase A (271 aa).

S-adenosyl-L-methionine-binding residues include His11, Leu13, Gly38, Glu58, Asp86, and Asn101.

It belongs to the class I-like SAM-binding methyltransferase superfamily. rRNA adenine N(6)-methyltransferase family. RsmA subfamily.

The protein localises to the cytoplasm. It carries out the reaction adenosine(1518)/adenosine(1519) in 16S rRNA + 4 S-adenosyl-L-methionine = N(6)-dimethyladenosine(1518)/N(6)-dimethyladenosine(1519) in 16S rRNA + 4 S-adenosyl-L-homocysteine + 4 H(+). Its function is as follows. Specifically dimethylates two adjacent adenosines (A1518 and A1519) in the loop of a conserved hairpin near the 3'-end of 16S rRNA in the 30S particle. May play a critical role in biogenesis of 30S subunits. This Helicobacter pylori (strain ATCC 700392 / 26695) (Campylobacter pylori) protein is Ribosomal RNA small subunit methyltransferase A.